Here is a 241-residue protein sequence, read N- to C-terminus: DnaA regulatory inactivator Hda (241 aa).

This sequence belongs to the DnaA family. HdA subfamily. The active form seems to be an ADP-bound monomer. Forms the RIDA complex (regulatory inactivation of DnaA) of ATP-DnaA, ADP-Hda and the DNA-loaded beta sliding clamp (dnaN).

Mediates the interaction of DNA replication initiator protein DnaA with DNA polymerase subunit beta sliding clamp (dnaN). Stimulates hydrolysis of ATP-DnaA to ADP-DnaA, rendering DnaA inactive for reinitiation, a process called regulatory inhibition of DnaA or RIDA. This Citrobacter koseri (strain ATCC BAA-895 / CDC 4225-83 / SGSC4696) protein is DnaA regulatory inactivator Hda.